Consider the following 310-residue polypeptide: Putative dihydroorotate dehydrogenase A (fumarate) (310 aa).

Substrate-binding positions include Lys-45, 69-73 (NSMGL), and Asn-128. An FMN-binding site is contributed by 45 to 46 (KT). Asn-128 serves as a coordination point for FMN. Cys-131 acts as the Nucleophile in catalysis. Residues Lys-165 and Val-193 each contribute to the FMN site. Substrate is bound at residue 194 to 195 (NS). Residues Gly-220, 248–249 (GG), and 270–271 (GT) contribute to the FMN site.

The protein belongs to the dihydroorotate dehydrogenase family. Type 1 subfamily. Homodimer. FMN is required as a cofactor.

It is found in the cytoplasm. The catalysed reaction is (S)-dihydroorotate + fumarate = orotate + succinate. Its pathway is pyrimidine metabolism; UMP biosynthesis via de novo pathway. Catalyzes the conversion of dihydroorotate to orotate with fumarate as the electron acceptor. The polypeptide is Putative dihydroorotate dehydrogenase A (fumarate) (pyrD) (Streptococcus agalactiae serotype Ia (strain ATCC 27591 / A909 / CDC SS700)).